A 382-amino-acid polypeptide reads, in one-letter code: Pyrimidine monooxygenase RutA (382 aa).

FMN contacts are provided by residues 68–69 (IK), asparagine 134, glutamate 143, 159–160 (RY), and serine 209.

The protein belongs to the NtaA/SnaA/DszA monooxygenase family. RutA subfamily.

It carries out the reaction uracil + FMNH2 + NADH + O2 = (Z)-3-ureidoacrylate + FMN + NAD(+) + H2O + H(+). The enzyme catalyses thymine + FMNH2 + NADH + O2 = (Z)-2-methylureidoacrylate + FMN + NAD(+) + H2O + H(+). Functionally, catalyzes the pyrimidine ring opening between N-3 and C-4 by an unusual flavin hydroperoxide-catalyzed mechanism, adding oxygen atoms in the process to yield ureidoacrylate peracid, that immediately reacts with FMN forming ureidoacrylate and FMN-N(5)-oxide. The FMN-N(5)-oxide reacts spontaneously with NADH to produce FMN. Requires the flavin reductase RutF to regenerate FMN in vivo. This Escherichia coli O55:H7 (strain CB9615 / EPEC) protein is Pyrimidine monooxygenase RutA.